The primary structure comprises 158 residues: Putative tyrosine-protein phosphatase OCA1 (158 aa).

In terms of domain architecture, Tyrosine-protein phosphatase spans 7 to 158; the sequence is NYGMVEENFY…DEELVFGASY (152 aa). The active-site Phosphocysteine intermediate is the Cys-99.

The protein belongs to the protein-tyrosine phosphatase family.

Its subcellular location is the cytoplasm. It carries out the reaction O-phospho-L-tyrosyl-[protein] + H2O = L-tyrosyl-[protein] + phosphate. Putative tyrosine-protein phosphatase required for protection against superoxide stress. In Mycosarcoma maydis (Corn smut fungus), this protein is Putative tyrosine-protein phosphatase OCA1 (OCA1).